The following is a 410-amino-acid chain: Elongation factor Tu, chloroplastic (410 aa).

In terms of domain architecture, tr-type G spans 10–214; it reads KPHVNIGTIG…QVDAYIPTPE (205 aa). Residues 19-26 form a G1 region; the sequence is GHVDHGKT. 19-26 serves as a coordination point for GTP; it reads GHVDHGKT. Mg(2+) is bound at residue Thr-26. The tract at residues 60-64 is G2; sequence GITIN. The G3 stretch occupies residues 81–84; sequence DCPG. GTP is bound by residues 81-85 and 136-139; these read DCPGH and NKED. The interval 136-139 is G4; that stretch reads NKED. The G5 stretch occupies residues 174–176; the sequence is SAL.

Belongs to the TRAFAC class translation factor GTPase superfamily. Classic translation factor GTPase family. EF-Tu/EF-1A subfamily.

The protein resides in the plastid. It is found in the chloroplast. The enzyme catalyses GTP + H2O = GDP + phosphate + H(+). In terms of biological role, GTP hydrolase that promotes the GTP-dependent binding of aminoacyl-tRNA to the A-site of ribosomes during protein biosynthesis. This Chlorokybus atmophyticus (Soil alga) protein is Elongation factor Tu, chloroplastic (tufA).